Here is a 339-residue protein sequence, read N- to C-terminus: Tetraacyldisaccharide 4'-kinase (339 aa).

61–68 is a binding site for ATP; the sequence is TAGGTGKT.

It belongs to the LpxK family.

It carries out the reaction a lipid A disaccharide + ATP = a lipid IVA + ADP + H(+). The protein operates within glycolipid biosynthesis; lipid IV(A) biosynthesis; lipid IV(A) from (3R)-3-hydroxytetradecanoyl-[acyl-carrier-protein] and UDP-N-acetyl-alpha-D-glucosamine: step 6/6. In terms of biological role, transfers the gamma-phosphate of ATP to the 4'-position of a tetraacyldisaccharide 1-phosphate intermediate (termed DS-1-P) to form tetraacyldisaccharide 1,4'-bis-phosphate (lipid IVA). In Stenotrophomonas maltophilia (strain R551-3), this protein is Tetraacyldisaccharide 4'-kinase.